We begin with the raw amino-acid sequence, 168 residues long: MARYEDLPYRTCVGVMLINREGLVFIGRRAGGIEHVDDTHVWQMPQGGVDPGEDTWKAAKRELYEETSVNSVEKLAEVPDWLIYDIPRTVAGRAWKGRYRGQRQKWFAARFTGADSEINVVHPGGGHKAEFTSWRWEPMHNLPELIVPFKRPVYERVVKEFSQLAAAV.

In terms of domain architecture, Nudix hydrolase spans 8–159; it reads PYRTCVGVML…KRPVYERVVK (152 aa). Residues 47–68 carry the Nudix box motif; it reads GGVDPGEDTWKAAKRELYEETS.

It belongs to the Nudix hydrolase family. RppH subfamily. A divalent metal cation serves as cofactor.

Accelerates the degradation of transcripts by removing pyrophosphate from the 5'-end of triphosphorylated RNA, leading to a more labile monophosphorylated state that can stimulate subsequent ribonuclease cleavage. The chain is RNA pyrophosphohydrolase from Rhodopseudomonas palustris (strain ATCC BAA-98 / CGA009).